The chain runs to 420 residues: MKKVMLATALFLGLTPAGANAADLGHQTLGSNDGWGAYSTGTTGGSKASSSNVYTVSNRNQLVSALGKETNTTPKIIYIKGTIDMNVDDNLKPLGLNDYKDPEYDLDKYLKAYDPSTWGKKEPSGTQEEARARSQKNQKARVMVDIPANTTIVGSGTNAKVVGGNFQIKSDNVIIRNIEFQDAYDYFPQWDPTDGSSGNWNSQYDNITINGGTHIWIDHCTFNDGSRPDSTSPKYYGRKYQHHDGQTDASNGANYITMSYNYYHDHDKSSIFGSSDSKTSDDGKLKITLHHNRYKNIVQRAPRVRFGQVHVYNNYYEGSTSSSSYPFSYAWGIGKSSKIYAQNNVIDVPGLSAAKTISVFSGGTALYDSGTLLNGTQINASAANGLSSSVGWTPSLHGSIDASANVKSNVINQAGAGKLN.

Positions 1 to 21 (MKKVMLATALFLGLTPAGANA) are cleaved as a signal peptide. The tract at residues 117–139 (TWGKKEPSGTQEEARARSQKNQK) is disordered. Basic and acidic residues predominate over residues 119-132 (GKKEPSGTQEEARA). Ca(2+) contacts are provided by aspartate 205, aspartate 244, and aspartate 248. Residue arginine 300 is part of the active site.

The protein belongs to the polysaccharide lyase 1 family. In terms of assembly, monomer. Requires Ca(2+) as cofactor.

It is found in the secreted. It catalyses the reaction Eliminative cleavage of (1-&gt;4)-alpha-D-galacturonan to give oligosaccharides with 4-deoxy-alpha-D-galact-4-enuronosyl groups at their non-reducing ends.. The protein operates within glycan metabolism; pectin degradation; 2-dehydro-3-deoxy-D-gluconate from pectin: step 2/5. In terms of biological role, produces unsaturated products from polygalacturonate. This Bacillus subtilis (strain 168) protein is Pectate lyase (pel).